Here is a 482-residue protein sequence, read N- to C-terminus: UDP-N-acetylmuramate--L-alanine ligase (482 aa).

Residue 111–117 (GTHGKTT) participates in ATP binding.

It belongs to the MurCDEF family.

It is found in the cytoplasm. The enzyme catalyses UDP-N-acetyl-alpha-D-muramate + L-alanine + ATP = UDP-N-acetyl-alpha-D-muramoyl-L-alanine + ADP + phosphate + H(+). Its pathway is cell wall biogenesis; peptidoglycan biosynthesis. Cell wall formation. This is UDP-N-acetylmuramate--L-alanine ligase from Symbiobacterium thermophilum (strain DSM 24528 / JCM 14929 / IAM 14863 / T).